A 352-amino-acid chain; its full sequence is Small ribosomal subunit biogenesis GTPase RsgA (352 aa).

The 169-residue stretch at 109–277 folds into the CP-type G domain; sequence DTVLKRPDMY…LIDSPGIREF (169 aa). GTP is bound by residues 165–168 and 219–227; these read NKAD and GQSGVGKSS. Residues Cys301, Cys306, His308, and Cys314 each contribute to the Zn(2+) site.

Belongs to the TRAFAC class YlqF/YawG GTPase family. RsgA subfamily. In terms of assembly, monomer. Associates with 30S ribosomal subunit, binds 16S rRNA. Requires Zn(2+) as cofactor.

Its subcellular location is the cytoplasm. Its function is as follows. One of several proteins that assist in the late maturation steps of the functional core of the 30S ribosomal subunit. Helps release RbfA from mature subunits. May play a role in the assembly of ribosomal proteins into the subunit. Circularly permuted GTPase that catalyzes slow GTP hydrolysis, GTPase activity is stimulated by the 30S ribosomal subunit. The protein is Small ribosomal subunit biogenesis GTPase RsgA of Alcanivorax borkumensis (strain ATCC 700651 / DSM 11573 / NCIMB 13689 / SK2).